A 123-amino-acid polypeptide reads, in one-letter code: Large ribosomal subunit protein bL12 (123 aa).

This sequence belongs to the bacterial ribosomal protein bL12 family. In terms of assembly, homodimer. Part of the ribosomal stalk of the 50S ribosomal subunit. Forms a multimeric L10(L12)X complex, where L10 forms an elongated spine to which 2 to 4 L12 dimers bind in a sequential fashion. Binds GTP-bound translation factors.

Functionally, forms part of the ribosomal stalk which helps the ribosome interact with GTP-bound translation factors. Is thus essential for accurate translation. The sequence is that of Large ribosomal subunit protein bL12 from Ectopseudomonas mendocina (strain ymp) (Pseudomonas mendocina).